Consider the following 810-residue polypeptide: Oligoxyloglucan-reducing end-specific xyloglucanase (810 aa).

A signal peptide spans 1-28 (MRAKNGPGSWLALTAIATSLNTLALAAA). Asparagine 32 carries an N-linked (GlcNAc...) asparagine glycan. Catalysis depends on aspartate 66, which acts as the Nucleophile. The stretch at 126–135 (FVSQDRGATF) is one BNR 1 repeat. An N-linked (GlcNAc...) asparagine glycan is attached at asparagine 188. The stretch at 226–236 (YVTRDSGESWE) is one BNR 2 repeat. Residues asparagine 298, asparagine 312, and asparagine 321 are each glycosylated (N-linked (GlcNAc...) asparagine). A BNR 3 repeat occupies 359-369 (YLSHDGGKSWK). Asparagine 455 is a glycosylation site (N-linked (GlcNAc...) asparagine). Aspartate 498 acts as the Proton donor in catalysis. N-linked (GlcNAc...) asparagine glycosylation occurs at asparagine 544. One copy of the BNR 4 repeat lies at 554-564 (YSADGGSSWTK). 2 N-linked (GlcNAc...) asparagine glycosylation sites follow: asparagine 573 and asparagine 612. A BNR 5 repeat occupies 617-626 (YVTTDLGQTW). Residue asparagine 638 is glycosylated (N-linked (GlcNAc...) asparagine). 3 BNR repeats span residues 658 to 667 (YLSRDGGLSY), 705 to 716 (YHTRNFGKKWTK), and 759 to 769 (YRSDDNGKTWV).

It belongs to the glycosyl hydrolase 74 family.

Its subcellular location is the secreted. The catalysed reaction is Hydrolysis of cellobiose from the reducing end of xyloglucans consisting of a beta-(1-&gt;4)-linked glucan carrying alpha-D-xylosyl groups on O-6 of the glucose residues. To be a substrate, the first residue must be unsubstituted, the second residue may bear a xylosyl group, whether further glycosylated or not, and the third residue, which becomes the new terminus by the action of the enzyme, is preferably xylosylated, but this xylose residue must not be further substituted.. In terms of biological role, oligoxyloglucan-reducing end-specific xyloglucanase involved in degradation of xyloglucans. Releases the first two glycosyl segments from oligoxyloglucans. Active against cotton xyloglucan, tamarind xyloglucan and tamarind xyloglucan oligomers. This Emericella nidulans (strain FGSC A4 / ATCC 38163 / CBS 112.46 / NRRL 194 / M139) (Aspergillus nidulans) protein is Oligoxyloglucan-reducing end-specific xyloglucanase (xgcA).